The sequence spans 226 residues: UPF0758 protein gbs1168 (226 aa).

Positions 103–225 constitute an MPN domain; sequence QILSSEQLAR…YYSFREEADI (123 aa). Residues His-174, His-176, and Asp-187 each coordinate Zn(2+). Residues 174–187 carry the JAMM motif motif; sequence HNHPSGSPNPSESD.

It belongs to the UPF0758 family.

The chain is UPF0758 protein gbs1168 from Streptococcus agalactiae serotype III (strain NEM316).